A 103-amino-acid chain; its full sequence is uncharacterized protein (103 aa).

The chain crosses the membrane as a helical span at residues 33–57 (GYVAAIVAGPVSMSPLDWICPLLAI).

It is found in the membrane. This is an uncharacterized protein from Sinorhizobium fredii (strain NBRC 101917 / NGR234).